The chain runs to 297 residues: Phosphoribosylaminoimidazole-succinocarboxamide synthase (297 aa).

This sequence belongs to the SAICAR synthetase family.

It catalyses the reaction 5-amino-1-(5-phospho-D-ribosyl)imidazole-4-carboxylate + L-aspartate + ATP = (2S)-2-[5-amino-1-(5-phospho-beta-D-ribosyl)imidazole-4-carboxamido]succinate + ADP + phosphate + 2 H(+). Its pathway is purine metabolism; IMP biosynthesis via de novo pathway; 5-amino-1-(5-phospho-D-ribosyl)imidazole-4-carboxamide from 5-amino-1-(5-phospho-D-ribosyl)imidazole-4-carboxylate: step 1/2. This is Phosphoribosylaminoimidazole-succinocarboxamide synthase from Saccharopolyspora erythraea (strain ATCC 11635 / DSM 40517 / JCM 4748 / NBRC 13426 / NCIMB 8594 / NRRL 2338).